The primary structure comprises 75 residues: M-myrmeciitoxin-Mp2a (75 aa).

A signal peptide spans 1 to 26; it reads MKLSCLLLTLAIIFVLTIVHAPNVEA. Residues 27-48 constitute a propeptide that is removed on maturation; the sequence is KALADPESDAVGFADAVGEADP. Position 74 is a leucine amide (L74).

It belongs to the formicidae venom precursor-01 superfamily. Ant pilosulin family. In terms of assembly, heterodimer with M-MIITX-Mp2b (pilosin-3b) (AC P0C023); disulfide-linked. Only heterodimers (and not monomers) have been identified in the venom. Expressed by the venom gland.

It is found in the secreted. In terms of biological role, heterodimer protein that may serve both defensive (pain-inducing) and predatory (insecticidal) roles. Has membrane-disrupting activity and shows induction of non-specific calcium influx into cells,. Shows broad-spectrum activity against a diverse range of bacteria, and cell lines, as well as hemolytic activity (EC(50)=2.18 uM). In vivo, shows moderate insecticidal activity against D.melanogaster and potent anthelmintic activity against the veterinary nematode H.contortus. In addition, intraplantar injection into mice induces nocifensive behavior and mechanical allodynia. The protein is M-myrmeciitoxin-Mp2a of Myrmecia pilosula (Jack jumper ant).